The sequence spans 186 residues: Threonylcarbamoyl-AMP synthase (186 aa).

One can recognise a YrdC-like domain in the interval 5 to 186 (LLTIKAAAKL…WEAQTQKRLR (182 aa)).

Belongs to the SUA5 family. TsaC subfamily.

Its subcellular location is the cytoplasm. The enzyme catalyses L-threonine + hydrogencarbonate + ATP = L-threonylcarbamoyladenylate + diphosphate + H2O. Required for the formation of a threonylcarbamoyl group on adenosine at position 37 (t(6)A37) in tRNAs that read codons beginning with adenine. Catalyzes the conversion of L-threonine, HCO(3)(-)/CO(2) and ATP to give threonylcarbamoyl-AMP (TC-AMP) as the acyladenylate intermediate, with the release of diphosphate. The polypeptide is Threonylcarbamoyl-AMP synthase (Hydrogenovibrio crunogenus (strain DSM 25203 / XCL-2) (Thiomicrospira crunogena)).